The sequence spans 288 residues: MIDLVFDARRKDLGNFEVGRVLPFHAHRMVGPFTFLDHMGPAAFQPGFPKSADVRPHPHIGLSTLTYLFEGEITHRDSVGSLAVIKPHEVNWMTAGSGITHSERFEGLREHGGRMDGMQAWVALPTEFEEIDPSFTHHEGPAELPYYENGGLKARLIAGEAFGAKSSVPVYSPLFYVHWELEPGVTAALPAEYPERAAYIAAGRVEVDGRELVEAQMAVFAPGETVVFKALERSTVMLLGGEPVGPRFIEWNFVSSSKDRIEQAKADWKAGRMKLPDLDHGEFIPLPE.

The protein belongs to the pirin family.

This Caulobacter vibrioides (strain ATCC 19089 / CIP 103742 / CB 15) (Caulobacter crescentus) protein is Pirin-like protein CC_3178.